Consider the following 238-residue polypeptide: Sugar fermentation stimulation protein homolog (238 aa).

The protein belongs to the SfsA family.

The sequence is that of Sugar fermentation stimulation protein homolog from Vibrio vulnificus (strain YJ016).